The sequence spans 74 residues: Defensin (74 aa).

The signal sequence occupies residues 1 to 21; the sequence is MRGIYICLVFVLVCGLVSGLA. A propeptide spanning residues 22–34 is cleaved from the precursor; the sequence is DVPAESEMAHLRV. 3 disulfides stabilise this stretch: Cys-40–Cys-61, Cys-47–Cys-69, and Cys-51–Cys-71.

As to expression, expressed in the hemocytes, fat body and ovaries.

It localises to the secreted. In terms of biological role, antibacterial peptide mostly active against Gram-positive bacteria. The protein is Defensin of Rhipicephalus microplus (Cattle tick).